Reading from the N-terminus, the 175-residue chain is Shikimate kinase (175 aa).

14–19 (GAGKST) provides a ligand contact to ATP. A Mg(2+)-binding site is contributed by serine 18. Residues aspartate 36, arginine 60, and glycine 82 each coordinate substrate. Arginine 120 serves as a coordination point for ATP. Arginine 140 lines the substrate pocket. Glutamine 157 is an ATP binding site.

It belongs to the shikimate kinase family. In terms of assembly, monomer. Requires Mg(2+) as cofactor.

It is found in the cytoplasm. It carries out the reaction shikimate + ATP = 3-phosphoshikimate + ADP + H(+). Its pathway is metabolic intermediate biosynthesis; chorismate biosynthesis; chorismate from D-erythrose 4-phosphate and phosphoenolpyruvate: step 5/7. In terms of biological role, catalyzes the specific phosphorylation of the 3-hydroxyl group of shikimic acid using ATP as a cosubstrate. In Pasteurella multocida (strain Pm70), this protein is Shikimate kinase.